Consider the following 351-residue polypeptide: Uroporphyrinogen decarboxylase (351 aa).

Residues 25-29 (RQAGR), aspartate 74, tyrosine 151, serine 206, and histidine 325 contribute to the substrate site.

The protein belongs to the uroporphyrinogen decarboxylase family. In terms of assembly, homodimer.

It is found in the cytoplasm. The catalysed reaction is uroporphyrinogen III + 4 H(+) = coproporphyrinogen III + 4 CO2. The protein operates within porphyrin-containing compound metabolism; protoporphyrin-IX biosynthesis; coproporphyrinogen-III from 5-aminolevulinate: step 4/4. Its function is as follows. Catalyzes the decarboxylation of four acetate groups of uroporphyrinogen-III to yield coproporphyrinogen-III. In Chlorobium limicola (strain DSM 245 / NBRC 103803 / 6330), this protein is Uroporphyrinogen decarboxylase.